The primary structure comprises 128 residues: Nanos homolog 1 (128 aa).

The segment at Phe-7–Gly-23 is essential for its translational repressor activity. The interval Gln-25–Val-52 is disordered. Residues Gly-56–Leu-110 form a Nanos-type zinc finger. Zn(2+)-binding residues include Cys-57, Cys-60, His-73, Cys-84, Cys-92, Cys-95, His-103, and Cys-108. Short sequence motifs (C2HC) lie at residues Cys-57 to Cys-84 and Cys-92 to Cys-108.

This sequence belongs to the nanos family. As to quaternary structure, interacts with ccnb1. As to expression, ovary and testis.

It is found in the cytoplasm. The protein localises to the perinuclear region. Acts as a translational repressor. Can mediate repression affecting different steps in the translation process: cap-driven, IRES-driven, polyadenylated RNAs or nonpolyadenylated RNAs. Essential for the development of primordial germ cells (PGCs) by ensuring their proper migration and survival. This is Nanos homolog 1 (nanos1) from Xenopus laevis (African clawed frog).